Consider the following 347-residue polypeptide: Doublecortin domain-containing protein 2C (347 aa).

2 consecutive Doublecortin domains span residues Lys16–Ile98 and Arg136–Trp217. Residues Lys235–Ser260 form a disordered region. A compositionally biased stretch (basic and acidic residues) spans Lys241–Leu251.

The protein localises to the cell projection. It is found in the cilium. Its subcellular location is the flagellum. It localises to the cytoplasm. This is Doublecortin domain-containing protein 2C from Mus musculus (Mouse).